The primary structure comprises 686 residues: ATP-dependent DNA helicase RecG (686 aa).

The segment at 50-149 is wedge domain; that stretch reads TVIDLNQAED…GTQTQENADV (100 aa). One can recognise a Helicase ATP-binding domain in the interval 279–439; the sequence is DLKAPIRMHR…VFGEMDVSSI (161 aa). 292-299 contacts ATP; that stretch reads GDVGSGKT. Residues 392-395 carry the DEAH box motif; that stretch reads DEQH. The 157-residue stretch at 462–618 folds into the Helicase C-terminal domain; that stretch reads VLMQMTSELK…GFELSERDLE (157 aa).

This sequence belongs to the helicase family. RecG subfamily. As to quaternary structure, monomer.

It carries out the reaction Couples ATP hydrolysis with the unwinding of duplex DNA by translocating in the 3'-5' direction.. The catalysed reaction is ATP + H2O = ADP + phosphate + H(+). Functionally, plays a critical role in recombination and DNA repair. Helps process Holliday junction intermediates to mature products by catalyzing branch migration. Has replication fork regression activity, unwinds stalled or blocked replication forks to make a HJ that can be resolved. Has a DNA unwinding activity characteristic of a DNA helicase with 3'-5' polarity. In Staphylococcus aureus (strain NCTC 8325 / PS 47), this protein is ATP-dependent DNA helicase RecG.